The chain runs to 353 residues: Protein XRP2 (353 aa).

Positions M1 to K37 are disordered. G2 is lipidated: N-myristoyl glycine. C3 is lipidated: S-palmitoyl cysteine. The span at E25 to K37 shows a compositional bias: basic and acidic residues. In terms of domain architecture, C-CAP/cofactor C-like spans P27 to P182. GTP contacts are provided by residues G101 to S102 and Q118 to R121.

The protein belongs to the TBCC family. Post-translationally, myristoylated on Gly-2; which may be required for membrane targeting. In terms of processing, palmitoylated on Cys-3; which may be required for plasma membrane targeting.

The protein resides in the cell membrane. Functionally, acts as a GTPase-activating protein (GAP) for tubulin in concert with tubulin-specific chaperone C, but does not enhance tubulin heterodimerization. Acts as a GTPase-activating protein. May act as guanine nucleotide dissociation inhibitor towards ADP-ribosylation factor-like proteins. The polypeptide is Protein XRP2 (rp2) (Xenopus laevis (African clawed frog)).